Reading from the N-terminus, the 45-residue chain is Photosystem II reaction center protein K (45 aa).

Positions 1 to 8 (MFSINFLG) are excised as a propeptide. A helical transmembrane segment spans residues 17–37 (FDPIVDVLPIIPLLFLLLAFV).

This sequence belongs to the PsbK family. As to quaternary structure, PSII is composed of 1 copy each of membrane proteins PsbA, PsbB, PsbC, PsbD, PsbE, PsbF, PsbH, PsbI, PsbJ, PsbK, PsbL, PsbM, PsbT, PsbY, PsbZ, Psb30/Ycf12, at least 3 peripheral proteins of the oxygen-evolving complex and a large number of cofactors. It forms dimeric complexes.

It localises to the plastid. The protein resides in the chloroplast thylakoid membrane. In terms of biological role, one of the components of the core complex of photosystem II (PSII). PSII is a light-driven water:plastoquinone oxidoreductase that uses light energy to abstract electrons from H(2)O, generating O(2) and a proton gradient subsequently used for ATP formation. It consists of a core antenna complex that captures photons, and an electron transfer chain that converts photonic excitation into a charge separation. The polypeptide is Photosystem II reaction center protein K (Euglena viridis (Cercaria viridis)).